Here is a 197-residue protein sequence, read N- to C-terminus: Rac-like GTP-binding protein RHO1 (197 aa).

13–20 (GDGAVGKT) provides a ligand contact to GTP. Residues 35 to 43 (YVPTVFDNF) carry the Effector region motif. GTP-binding positions include 60–64 (DTAGQ) and 118–121 (TKLD). Cys-194 bears the Cysteine methyl ester mark. Residue Cys-194 is the site of S-geranylgeranyl cysteine attachment. The propeptide at 195–197 (SIL) is removed in mature form.

Belongs to the small GTPase superfamily. Rho family. As to expression, expressed at the tip of pollen tubes.

The protein resides in the cytoplasm. It is found in the membrane. Functionally, inactive GDP-bound Rho GTPases reside in the cytosol, are found in a complex with Rho GDP-dissociation inhibitors (Rho GDIs), and are released from the GDI protein in order to translocate to membranes upon activation. May be involved in cell polarity control during the actin-dependent tip growth of pollen tubes. The protein is Rac-like GTP-binding protein RHO1 (RHO1) of Pisum sativum (Garden pea).